The chain runs to 293 residues: Probable xyloglucan endotransglucosylase/hydrolase protein 5 (293 aa).

An N-terminal signal peptide occupies residues 1-21 (MGRLSSTLCLTFLILATVAFG). Positions 23–220 (PPKKSINVPF…WEKAPFVASY (198 aa)) constitute a GH16 domain. The active-site Nucleophile is Glu106. Glu110 acts as the Proton donor in catalysis. Glu110 lines the xyloglucan pocket. N-linked (GlcNAc...) asparagine glycosylation is present at Asn114. Residues 123–125 (QTN), 133–135 (NRE), 199–200 (DW), and Gly204 contribute to the xyloglucan site. 2 disulfides stabilise this stretch: Cys228/Cys237 and Cys274/Cys287. A xyloglucan-binding site is contributed by Arg279.

Belongs to the glycosyl hydrolase 16 family. XTH group 1 subfamily. Contains at least one intrachain disulfide bond essential for its enzymatic activity. In terms of tissue distribution, root specific.

The protein localises to the secreted. It is found in the cell wall. The protein resides in the extracellular space. It localises to the apoplast. It catalyses the reaction breaks a beta-(1-&gt;4) bond in the backbone of a xyloglucan and transfers the xyloglucanyl segment on to O-4 of the non-reducing terminal glucose residue of an acceptor, which can be a xyloglucan or an oligosaccharide of xyloglucan.. Its function is as follows. Catalyzes xyloglucan endohydrolysis (XEH) and/or endotransglycosylation (XET). Cleaves and religates xyloglucan polymers, an essential constituent of the primary cell wall, and thereby participates in cell wall construction of growing tissues. In Arabidopsis thaliana (Mouse-ear cress), this protein is Probable xyloglucan endotransglucosylase/hydrolase protein 5 (XTH5).